Consider the following 160-residue polypeptide: SsrA-binding protein (160 aa).

This sequence belongs to the SmpB family.

Its subcellular location is the cytoplasm. In terms of biological role, required for rescue of stalled ribosomes mediated by trans-translation. Binds to transfer-messenger RNA (tmRNA), required for stable association of tmRNA with ribosomes. tmRNA and SmpB together mimic tRNA shape, replacing the anticodon stem-loop with SmpB. tmRNA is encoded by the ssrA gene; the 2 termini fold to resemble tRNA(Ala) and it encodes a 'tag peptide', a short internal open reading frame. During trans-translation Ala-aminoacylated tmRNA acts like a tRNA, entering the A-site of stalled ribosomes, displacing the stalled mRNA. The ribosome then switches to translate the ORF on the tmRNA; the nascent peptide is terminated with the 'tag peptide' encoded by the tmRNA and targeted for degradation. The ribosome is freed to recommence translation, which seems to be the essential function of trans-translation. The polypeptide is SsrA-binding protein (Rhodospirillum rubrum (strain ATCC 11170 / ATH 1.1.1 / DSM 467 / LMG 4362 / NCIMB 8255 / S1)).